Reading from the N-terminus, the 156-residue chain is ATP synthase subunit b (156 aa).

A helical transmembrane segment spans residues 7-27 (LFAQMVVFLILAWFTMKFVWP).

It belongs to the ATPase B chain family. In terms of assembly, F-type ATPases have 2 components, F(1) - the catalytic core - and F(0) - the membrane proton channel. F(1) has five subunits: alpha(3), beta(3), gamma(1), delta(1), epsilon(1). F(0) has three main subunits: a(1), b(2) and c(10-14). The alpha and beta chains form an alternating ring which encloses part of the gamma chain. F(1) is attached to F(0) by a central stalk formed by the gamma and epsilon chains, while a peripheral stalk is formed by the delta and b chains.

Its subcellular location is the cell inner membrane. Its function is as follows. F(1)F(0) ATP synthase produces ATP from ADP in the presence of a proton or sodium gradient. F-type ATPases consist of two structural domains, F(1) containing the extramembraneous catalytic core and F(0) containing the membrane proton channel, linked together by a central stalk and a peripheral stalk. During catalysis, ATP synthesis in the catalytic domain of F(1) is coupled via a rotary mechanism of the central stalk subunits to proton translocation. Component of the F(0) channel, it forms part of the peripheral stalk, linking F(1) to F(0). The chain is ATP synthase subunit b from Paraburkholderia xenovorans (strain LB400).